A 109-amino-acid chain; its full sequence is Period circadian protein (109 aa).

The tract at residues 29–100 (ITAPVDVDPH…TGTSSGSVQL (72 aa)) is disordered. Over residues 69–97 (SGNFNSGSNLHIGSITNTSNTGTGTSSGS) the composition is skewed to low complexity.

As to quaternary structure, forms a heterodimer with timeless (TIM); the complex then translocates into the nucleus. In terms of processing, phosphorylated with a circadian rhythmicity, probably by the double-time protein (dbt). Phosphorylation could be implicated in the stability of per monomer and in the formation of heterodimer per-tim.

It is found in the nucleus. The protein localises to the cytoplasm. It localises to the perinuclear region. Essential for biological clock functions. Determines the period length of circadian and ultradian rhythms; an increase in PER dosage leads to shortened circadian rhythms and a decrease leads to lengthened circadian rhythms. Essential for the circadian rhythmicity of locomotor activity, eclosion behavior, and for the rhythmic component of the male courtship song that originates in the thoracic nervous system. The biological cycle depends on the rhythmic formation and nuclear localization of the TIM-PER complex. Light induces the degradation of TIM, which promotes elimination of PER. Nuclear activity of the heterodimer coordinatively regulates PER and TIM transcription through a negative feedback loop. Behaves as a negative element in circadian transcriptional loop. Does not appear to bind DNA, suggesting indirect transcriptional inhibition. The polypeptide is Period circadian protein (per) (Loxocera albiseta (Rust fly)).